A 152-amino-acid chain; its full sequence is UPF0266 membrane protein YobD (152 aa).

Helical transmembrane passes span 6–26 (LVLI…QFIM), 45–65 (VDSV…VTSH), and 67–87 (AQMT…IFWI).

The protein belongs to the UPF0266 family.

It localises to the cell inner membrane. This is UPF0266 membrane protein YobD from Salmonella enteritidis PT4 (strain P125109).